The sequence spans 362 residues: NAD(P)H-quinone oxidoreductase subunit 1, chloroplastic (362 aa).

8 consecutive transmembrane segments (helical) span residues tryptophan 31–valine 51, tryptophan 99–valine 119, isoleucine 132–glycine 152, leucine 178–valine 198, isoleucine 206–leucine 226, leucine 268–isoleucine 288, alanine 303–leucine 323, and leucine 336–alanine 356.

Belongs to the complex I subunit 1 family. NDH is composed of at least 16 different subunits, 5 of which are encoded in the nucleus.

It is found in the plastid. It localises to the chloroplast thylakoid membrane. It catalyses the reaction a plastoquinone + NADH + (n+1) H(+)(in) = a plastoquinol + NAD(+) + n H(+)(out). The enzyme catalyses a plastoquinone + NADPH + (n+1) H(+)(in) = a plastoquinol + NADP(+) + n H(+)(out). Its function is as follows. NDH shuttles electrons from NAD(P)H:plastoquinone, via FMN and iron-sulfur (Fe-S) centers, to quinones in the photosynthetic chain and possibly in a chloroplast respiratory chain. The immediate electron acceptor for the enzyme in this species is believed to be plastoquinone. Couples the redox reaction to proton translocation, and thus conserves the redox energy in a proton gradient. The protein is NAD(P)H-quinone oxidoreductase subunit 1, chloroplastic of Nephroselmis olivacea (Green alga).